Here is a 310-residue protein sequence, read N- to C-terminus: Acetyl-coenzyme A carboxylase carboxyl transferase subunit beta (310 aa).

The CoA carboxyltransferase N-terminal domain maps to 27–296; that stretch reads LWKKCPKCSA…PEFENEEELE (270 aa). Positions 31, 34, 50, and 53 each coordinate Zn(2+). Residues 31-53 form a C4-type zinc finger; sequence CPKCSAVLYRPELEKNLDVCPKC. The disordered stretch occupies residues 285 to 310; that stretch reads PEPEFENEEELEEEEMERPEPPDNVE. The span at 287–310 shows a compositional bias: acidic residues; sequence PEFENEEELEEEEMERPEPPDNVE.

Belongs to the AccD/PCCB family. As to quaternary structure, acetyl-CoA carboxylase is a heterohexamer composed of biotin carboxyl carrier protein (AccB), biotin carboxylase (AccC) and two subunits each of ACCase subunit alpha (AccA) and ACCase subunit beta (AccD). Zn(2+) is required as a cofactor.

Its subcellular location is the cytoplasm. It catalyses the reaction N(6)-carboxybiotinyl-L-lysyl-[protein] + acetyl-CoA = N(6)-biotinyl-L-lysyl-[protein] + malonyl-CoA. It participates in lipid metabolism; malonyl-CoA biosynthesis; malonyl-CoA from acetyl-CoA: step 1/1. Functionally, component of the acetyl coenzyme A carboxylase (ACC) complex. Biotin carboxylase (BC) catalyzes the carboxylation of biotin on its carrier protein (BCCP) and then the CO(2) group is transferred by the transcarboxylase to acetyl-CoA to form malonyl-CoA. This is Acetyl-coenzyme A carboxylase carboxyl transferase subunit beta from Hahella chejuensis (strain KCTC 2396).